The chain runs to 121 residues: Methylglyoxal synthase (121 aa).

One can recognise an MGS-like domain in the interval 1–121 (MMKVALIAHD…SAELFLRALN (121 aa)). Substrate-binding positions include His9, Lys13, 35–38 (TGTT), and 55–56 (SG). Residue Asp61 is the Proton donor/acceptor of the active site. His88 is a binding site for substrate.

The protein belongs to the methylglyoxal synthase family.

The enzyme catalyses dihydroxyacetone phosphate = methylglyoxal + phosphate. Functionally, catalyzes the formation of methylglyoxal from dihydroxyacetone phosphate. The protein is Methylglyoxal synthase of Carboxydothermus hydrogenoformans (strain ATCC BAA-161 / DSM 6008 / Z-2901).